Reading from the N-terminus, the 141-residue chain is Large ribosomal subunit protein uL11 (141 aa).

It belongs to the universal ribosomal protein uL11 family. Part of the ribosomal stalk of the 50S ribosomal subunit. Interacts with L10 and the large rRNA to form the base of the stalk. L10 forms an elongated spine to which L12 dimers bind in a sequential fashion forming a multimeric L10(L12)X complex. One or more lysine residues are methylated.

Forms part of the ribosomal stalk which helps the ribosome interact with GTP-bound translation factors. The polypeptide is Large ribosomal subunit protein uL11 (Dinoroseobacter shibae (strain DSM 16493 / NCIMB 14021 / DFL 12)).